Here is a 121-residue protein sequence, read N- to C-terminus: ATP synthase epsilon chain (121 aa).

The protein belongs to the ATPase epsilon chain family. As to quaternary structure, F-type ATPases have 2 components, CF(1) - the catalytic core - and CF(0) - the membrane proton channel. CF(1) has five subunits: alpha(3), beta(3), gamma(1), delta(1), epsilon(1). CF(0) has three main subunits: a, b and c.

It localises to the cell membrane. Functionally, produces ATP from ADP in the presence of a proton gradient across the membrane. In Mycolicibacterium smegmatis (strain ATCC 700084 / mc(2)155) (Mycobacterium smegmatis), this protein is ATP synthase epsilon chain.